We begin with the raw amino-acid sequence, 118 residues long: MPIATPKQKTTQRIKMRIHKGDTVQVITGKDKGKTGEVLRTLPIENRVIVQGVNIRTRHVKPTQEGESGRIVTEEASVHASNVMLYSNKKKIASRVELVVEKDGSKKRRLKKTGELID.

It belongs to the universal ribosomal protein uL24 family. In terms of assembly, part of the 50S ribosomal subunit.

Functionally, one of two assembly initiator proteins, it binds directly to the 5'-end of the 23S rRNA, where it nucleates assembly of the 50S subunit. One of the proteins that surrounds the polypeptide exit tunnel on the outside of the subunit. The chain is Large ribosomal subunit protein uL24 from Prochlorococcus marinus (strain MIT 9313).